Consider the following 366-residue polypeptide: uncharacterized protein (366 aa).

The 112-residue stretch at 169 to 280 (ILDTSVIIDG…LNKVCELQKV (112 aa)) folds into the PINc domain. A Mg(2+)-binding site is contributed by aspartate 250. The region spanning 295–356 (VVLPGEEMNV…LQTAAGRMIF (62 aa)) is the TRAM domain.

This sequence belongs to the ycf81 family. It in the central section; belongs to the PINc/VapC protein family. Mg(2+) is required as a cofactor.

In terms of biological role, an RNase. This is an uncharacterized protein from Bacillus subtilis (strain 168).